Here is a 291-residue protein sequence, read N- to C-terminus: ATP synthase gamma chain (291 aa).

Belongs to the ATPase gamma chain family. As to quaternary structure, F-type ATPases have 2 components, CF(1) - the catalytic core - and CF(0) - the membrane proton channel. CF(1) has five subunits: alpha(3), beta(3), gamma(1), delta(1), epsilon(1). CF(0) has three main subunits: a, b and c.

Its subcellular location is the cell inner membrane. In terms of biological role, produces ATP from ADP in the presence of a proton gradient across the membrane. The gamma chain is believed to be important in regulating ATPase activity and the flow of protons through the CF(0) complex. This chain is ATP synthase gamma chain, found in Burkholderia pseudomallei (strain 1106a).